Reading from the N-terminus, the 556-residue chain is Formate--tetrahydrofolate ligase 1 (556 aa).

65–72 (TPAGEGKS) provides a ligand contact to ATP.

The protein belongs to the formate--tetrahydrofolate ligase family.

It carries out the reaction (6S)-5,6,7,8-tetrahydrofolate + formate + ATP = (6R)-10-formyltetrahydrofolate + ADP + phosphate. The protein operates within one-carbon metabolism; tetrahydrofolate interconversion. The chain is Formate--tetrahydrofolate ligase 1 from Streptococcus pyogenes serotype M28 (strain MGAS6180).